Reading from the N-terminus, the 565-residue chain is NAD-dependent malic enzyme (565 aa).

Y103 (proton donor) is an active-site residue. The Proton acceptor role is filled by K177. A divalent metal cation is bound by residues E248, D249, and D272. The NAD(+) site is built by D272 and N419. At S445 the chain carries Phosphoserine.

The protein belongs to the malic enzymes family. The cofactor is Mg(2+). It depends on Mn(2+) as a cofactor.

It catalyses the reaction (S)-malate + NAD(+) = pyruvate + CO2 + NADH. The catalysed reaction is oxaloacetate + H(+) = pyruvate + CO2. This Schizosaccharomyces pombe (strain 972 / ATCC 24843) (Fission yeast) protein is NAD-dependent malic enzyme (mae2).